The chain runs to 126 residues: Profilin (126 aa).

The protein belongs to the profilin family. In terms of assembly, occurs in many kinds of cells as a complex with monomeric actin in a 1:1 ratio.

It is found in the cytoplasm. The protein resides in the cytoskeleton. Functionally, binds to actin and affects the structure of the cytoskeleton. At high concentrations, profilin prevents the polymerization of actin, whereas it enhances it at low concentrations. By binding to PIP2, it inhibits the formation of IP3 and DG. This is Profilin (PFY1) from Saccharomyces cerevisiae (strain ATCC 204508 / S288c) (Baker's yeast).